A 162-amino-acid chain; its full sequence is Protein SLM4 (162 aa).

Residues 127–144 (LLLLFIAEGSFPYGLLVI) traverse the membrane as a helical segment.

Component of the GSE complex composed of GTR1, GTR2, SLM4, MEH1 and LTV1. Component of the EGO complex, at least composed of GTR2, SLM4 and MEH1.

Its subcellular location is the vacuole membrane. Component of the GSE complex, a GTPase complex required for intracellular sorting of GAP1 out of the endosome. Component of the EGO complex, a complex involved in the regulation of microautophagy. The polypeptide is Protein SLM4 (SLM4) (Saccharomyces cerevisiae (strain ATCC 204508 / S288c) (Baker's yeast)).